Reading from the N-terminus, the 464-residue chain is Protein FAM90A23 (464 aa).

3 disordered regions span residues 1–42 (MMAR…DPRL), 69–389 (VPAT…HDGA), and 415–437 (HSPE…SEAP). Basic and acidic residues-rich tracts occupy residues 74–89 (GKKE…KPRA) and 97–114 (NKDK…DPQR). The span at 180-197 (LASLSPLRKASLSSSSSL) shows a compositional bias: low complexity.

It belongs to the FAM90 family.

This Homo sapiens (Human) protein is Protein FAM90A23.